Here is a 612-residue protein sequence, read N- to C-terminus: Baeyer-Villiger monooxygenase 4 (612 aa).

Residues glutamate 99, 107–110, aspartate 119, tyrosine 125, and alanine 169 each bind FAD; that span reads TWYW. Residue 117 to 119 coordinates NADP(+); the sequence is QCD. NADP(+) is bound by residues 253-259, 276-277, and 393-394; these read TGATGVQ, RT, and KR.

Belongs to the FAD-binding monooxygenase family. FAD is required as a cofactor.

Catalyzes a Baeyer-Villiger oxidation reaction, i.e. the insertion of an oxygen atom into a carbon-carbon bond adjacent to a carbonyl, which converts ketones to esters or lactones using NADPH as an electron donor. Has a broad substrate scope and oxidizes different compounds including substituted and unsubstituted alicyclic, bicyclic-, aliphatic-ketones, ketones with an aromatic moiety, and sulfides. The highest activities are measured for 2- and 3-methylcyclohexanone, phenylacetone, bicyclo[3.2.0]hept-2-en-6-one and menthone. Cannot use NADH instead of NADPH. Is not active on benzaldehyde. This Dietzia sp. (strain D5) protein is Baeyer-Villiger monooxygenase 4.